Here is a 75-residue protein sequence, read N- to C-terminus: UPF0352 protein KPN78578_25810 (75 aa).

It belongs to the UPF0352 family.

The sequence is that of UPF0352 protein KPN78578_25810 from Klebsiella pneumoniae subsp. pneumoniae (strain ATCC 700721 / MGH 78578).